Here is a 30-residue protein sequence, read N- to C-terminus: Bacteriocin plantaricin KL-1Y (30 aa).

It localises to the secreted. Its function is as follows. Bacteriocin with activity against species of Lactobacillus, Lactococcus, Pediococcus, Leuconostoc and against B.subtilis and, to a lesser extent, against B.coagulans, B.cereus and species of Enterococcus, Listeria, Kocuria, Staphylococcus, Corynebacterium, Salmonella, Pseudomonas and Escherichia. In Lactiplantibacillus plantarum (Lactobacillus plantarum), this protein is Bacteriocin plantaricin KL-1Y.